Here is a 38-residue protein sequence, read N- to C-terminus: Large ribosomal subunit protein bL36A (38 aa).

It belongs to the bacterial ribosomal protein bL36 family.

This Cronobacter sakazakii (strain ATCC BAA-894) (Enterobacter sakazakii) protein is Large ribosomal subunit protein bL36A.